We begin with the raw amino-acid sequence, 251 residues long: Myozenin-3 (251 aa).

Ser-31 is subject to Phosphoserine. The interval 50-67 is binding to ACTN2, PPP3CA and TCAP; the sequence is LLFQKRQRRVQKFTFELA. Residues 67–110 are binding to FLNC; sequence AASQRAMLAGSARRKVTGTAESGTVANANGPEGPNYRSELHIFP. A disordered region spans residues 79–102; sequence RRKVTGTAESGTVANANGPEGPNY. The interval 186–207 is binding to ACTN2; that stretch reads PSPNDYRNFNKTPVPFGGPLVG.

It belongs to the myozenin family. As to quaternary structure, interacts with ACTN2, LDB3, FLNC, PPP3CA and TCAP. As to expression, expressed specifically in skeletal muscle. Not detected in heart.

The protein localises to the cytoplasm. It localises to the myofibril. The protein resides in the sarcomere. It is found in the z line. Myozenins may serve as intracellular binding proteins involved in linking Z line proteins such as alpha-actinin, gamma-filamin, TCAP/telethonin, LDB3/ZASP and localizing calcineurin signaling to the sarcomere. Plays an important role in the modulation of calcineurin signaling. May play a role in myofibrillogenesis. This is Myozenin-3 from Homo sapiens (Human).